Reading from the N-terminus, the 324-residue chain is DNA repair and recombination protein RadA (324 aa).

114–121 is a binding site for ATP; sequence GEFGSGKT.

It belongs to the eukaryotic RecA-like protein family.

Functionally, involved in DNA repair and in homologous recombination. Binds and assemble on single-stranded DNA to form a nucleoprotein filament. Hydrolyzes ATP in a ssDNA-dependent manner and promotes DNA strand exchange between homologous DNA molecules. This is DNA repair and recombination protein RadA from Saccharolobus islandicus (strain Y.N.15.51 / Yellowstone #2) (Sulfolobus islandicus).